The following is a 132-amino-acid chain: L-ectoine synthase (132 aa).

This sequence belongs to the ectoine synthase family.

It catalyses the reaction (2S)-4-acetamido-2-aminobutanoate = L-ectoine + H2O. It functions in the pathway amine and polyamine biosynthesis; ectoine biosynthesis; L-ectoine from L-aspartate 4-semialdehyde: step 3/3. Catalyzes the circularization of gamma-N-acetyl-alpha,gamma-diaminobutyric acid (ADABA) to ectoine (1,4,5,6-tetrahydro-2-methyl-4-pyrimidine carboxylic acid), which is an excellent osmoprotectant. This Rhodococcus jostii (strain RHA1) protein is L-ectoine synthase.